The primary structure comprises 967 residues: Zinc finger protein with KRAB and SCAN domains 2 (967 aa).

Lys-22 is covalently cross-linked (Glycyl lysine isopeptide (Lys-Gly) (interchain with G-Cter in SUMO2)). Positions 45 to 127 (RKCFRQFCYE…ALVVHLEKET (83 aa)) constitute an SCAN box domain. The tract at residues 150 to 205 (WEVADFQPEQVETQPRAVSREEPGSLHSGHQEQLNRKRERRPLPKNARPSPWVPAL) is disordered. The span at 167–185 (VSREEPGSLHSGHQEQLNR) shows a compositional bias: basic and acidic residues. The region spanning 229 to 300 (VKDVHVARGF…GLHSSNKRSI (72 aa)) is the KRAB domain. Residues Lys-242, Lys-259, Lys-277, Lys-337, Lys-482, and Lys-529 each participate in a glycyl lysine isopeptide (Lys-Gly) (interchain with G-Cter in SUMO2) cross-link. A compositionally biased stretch (low complexity) spans 586 to 602 (RASAPSPSTPEEVPSPS). The segment at 586 to 626 (RASAPSPSTPEEVPSPSRQERGGIEVEPQEPTGWEPEETSQ) is disordered. Ser-591 and Ser-600 each carry phosphoserine. Residues Lys-734, Lys-745, and Lys-752 each participate in a glycyl lysine isopeptide (Lys-Gly) (interchain with G-Cter in SUMO2) cross-link. 6 consecutive C2H2-type zinc fingers follow at residues 775–797 (YKCG…QRIH), 803–825 (FKCL…QRIH), 831–853 (YRCG…QRTH), 859–881 (YQCG…RRVH), 887–909 (YKCV…RRIH), and 915–937 (YGCA…REVH). The segment at 941–967 (KPLPHPPSLYCPENPHKGKTDEFRKTF) is disordered. Over residues 954 to 967 (NPHKGKTDEFRKTF) the composition is skewed to basic and acidic residues.

It belongs to the krueppel C2H2-type zinc-finger protein family.

It localises to the nucleus. Functionally, may be involved in transcriptional regulation. The protein is Zinc finger protein with KRAB and SCAN domains 2 (ZKSCAN2) of Homo sapiens (Human).